Consider the following 267-residue polypeptide: Integral membrane protein 2C (267 aa).

Position 37 is a phosphothreonine (Thr37). The chain crosses the membrane as a helical; Signal-anchor for type II membrane protein span at residues 55-75 (VGGVCYLSMGMVVLLMGLVFA). The region spanning 136-230 (FGGGDPADII…LCNGKDTYRL (95 aa)) is the BRICHOS domain. Cys163 and Cys222 are oxidised to a cystine. A glycan (N-linked (GlcNAc...) asparagine) is linked at Asn169.

Belongs to the ITM2 family. As to quaternary structure, interacts with BACE1. Interacts with APP. Interacts with STMN2. Post-translationally, type I membrane-bound, as well as soluble, furin has a pre-eminent role in ITM2C proteolytic processing. PCSK7 and PCSK5 may also be involved although to a lesser extent. The soluble form of PCSK7 is incapable of processing ITM2C. Fails to undergo shedding by ADAM10 and intramembrane cleavage by SPPL2B.

It is found in the lysosome membrane. The protein resides in the cell membrane. Negative regulator of amyloid-beta peptide production. May inhibit the processing of APP by blocking its access to alpha- and beta-secretase. Binding to the beta-secretase-cleaved APP C-terminal fragment is negligible, suggesting that ITM2C is a poor gamma-secretase cleavage inhibitor. May play a role in TNF-induced cell death and neuronal differentiation. The protein is Integral membrane protein 2C (ITM2C) of Pongo abelii (Sumatran orangutan).